We begin with the raw amino-acid sequence, 93 residues long: Small ribosomal subunit protein uS19 (93 aa).

Belongs to the universal ribosomal protein uS19 family.

Its function is as follows. Protein S19 forms a complex with S13 that binds strongly to the 16S ribosomal RNA. In Cutibacterium acnes (strain DSM 16379 / KPA171202) (Propionibacterium acnes), this protein is Small ribosomal subunit protein uS19.